We begin with the raw amino-acid sequence, 502 residues long: Probable cytochrome P450 313b1 (502 aa).

Residue C449 coordinates heme.

It belongs to the cytochrome P450 family. Requires heme as cofactor.

It localises to the endoplasmic reticulum membrane. The protein resides in the microsome membrane. May be involved in the metabolism of insect hormones and in the breakdown of synthetic insecticides. In Drosophila melanogaster (Fruit fly), this protein is Probable cytochrome P450 313b1 (Cyp313b1).